The sequence spans 202 residues: Glycerol-3-phosphate acyltransferase (202 aa).

The next 6 membrane-spanning stretches (helical) occupy residues 2–22 (MIVV…GYVI), 54–74 (FIVT…PIWF), 85–105 (FFTH…YPIY), 120–140 (VVLG…FGVL), 141–161 (YIFK…VIGS), and 162–182 (LIIQ…ILIV).

The protein belongs to the PlsY family. As to quaternary structure, probably interacts with PlsX.

Its subcellular location is the cell membrane. The enzyme catalyses an acyl phosphate + sn-glycerol 3-phosphate = a 1-acyl-sn-glycero-3-phosphate + phosphate. Its pathway is lipid metabolism; phospholipid metabolism. In terms of biological role, catalyzes the transfer of an acyl group from acyl-phosphate (acyl-PO(4)) to glycerol-3-phosphate (G3P) to form lysophosphatidic acid (LPA). This enzyme utilizes acyl-phosphate as fatty acyl donor, but not acyl-CoA or acyl-ACP. The sequence is that of Glycerol-3-phosphate acyltransferase from Staphylococcus haemolyticus (strain JCSC1435).